The sequence spans 239 residues: uncharacterized protein (239 aa).

This is an uncharacterized protein from Bacillus subtilis (strain 168).